Reading from the N-terminus, the 125-residue chain is MLPEPHRLRRHSDFSMTVRRGRRMGRRDLVVHAFDRAQADELVSSGGPRFGLVVSKAVGPAVIRHRVARRLRHICIDLVDVVPRGTDVVIRALPGAATASSRDLEKQLRAGLLRLDLLAPVSTSA.

It belongs to the RnpA family. Consists of a catalytic RNA component (M1 or rnpB) and a protein subunit.

It carries out the reaction Endonucleolytic cleavage of RNA, removing 5'-extranucleotides from tRNA precursor.. Functionally, RNaseP catalyzes the removal of the 5'-leader sequence from pre-tRNA to produce the mature 5'-terminus. It can also cleave other RNA substrates such as 4.5S RNA. The protein component plays an auxiliary but essential role in vivo by binding to the 5'-leader sequence and broadening the substrate specificity of the ribozyme. In Rhodococcus jostii (strain RHA1), this protein is Ribonuclease P protein component.